We begin with the raw amino-acid sequence, 1375 residues long: DNA-directed RNA polymerase subunit beta (1375 aa).

Belongs to the RNA polymerase beta chain family. The RNAP catalytic core consists of 2 alpha, 1 beta, 1 beta' and 1 omega subunit. When a sigma factor is associated with the core the holoenzyme is formed, which can initiate transcription.

It catalyses the reaction RNA(n) + a ribonucleoside 5'-triphosphate = RNA(n+1) + diphosphate. DNA-dependent RNA polymerase catalyzes the transcription of DNA into RNA using the four ribonucleoside triphosphates as substrates. This is DNA-directed RNA polymerase subunit beta from Oleidesulfovibrio alaskensis (strain ATCC BAA-1058 / DSM 17464 / G20) (Desulfovibrio alaskensis).